We begin with the raw amino-acid sequence, 478 residues long: RNA-binding protein 42 (478 aa).

A compositionally biased stretch (low complexity) spans Met1–Pro20. The interval Met1 to Ser33 is disordered. Ala2 bears the N-acetylalanine mark. The residue at position 133 (Ser133) is a Phosphoserine. 4 positions are modified to asymmetric dimethylarginine: Arg151, Arg156, Arg166, and Arg179. Disordered stretches follow at residues Leu171–Ala209 and Ser317–Leu354. Positions Pro193–Leu205 are enriched in pro residues. The segment at Asp234–Arg478 is necessary for interaction with HNRNPK. The segment covering Gly343–Leu354 has biased composition (basic and acidic residues). In terms of domain architecture, RRM spans Phe379–Trp457.

The protein belongs to the RRM RBM42 family. As to quaternary structure, interacts with HNRNPK.

It localises to the nucleus. The protein resides in the cytoplasm. Its function is as follows. Binds (via the RRM domain) to the 3' untranslated region (UTR) of p21 mRNA. The protein is RNA-binding protein 42 (Rbm42) of Rattus norvegicus (Rat).